The chain runs to 62 residues: Large ribosomal subunit protein bL28 (62 aa).

It belongs to the bacterial ribosomal protein bL28 family.

This Streptococcus agalactiae serotype Ia (strain ATCC 27591 / A909 / CDC SS700) protein is Large ribosomal subunit protein bL28.